Here is a 427-residue protein sequence, read N- to C-terminus: rRNA-processing protein EBP2 (427 aa).

Basic and acidic residues-rich tracts occupy residues 29 to 40 and 49 to 65; these read KKKSQELKKEEP and KKLE…KEVA. A disordered region spans residues 29-190; the sequence is KKKSQELKKE…FDSDADVVPH (162 aa). The stretch at 45–174 forms a coiled coil; that stretch reads ASNLKKLEKK…KEEQEEEQDV (130 aa). Positions 79 to 88 are enriched in basic residues; it reads KEKRKLKKEL. Positions 89 to 105 are enriched in basic and acidic residues; sequence KKMQEQDATEAQKHMSG. Position 104 is a phosphoserine (Ser104). Residues 106–126 are compositionally biased toward acidic residues; it reads DEDESGDDREEEEEEEEEEEG. The span at 127–138 shows a compositional bias: basic and acidic residues; the sequence is RLDLEKLAKSDS. Composition is skewed to acidic residues over residues 139–155 and 163–185; these read ESED…EDED and EEKE…DSDA. A phosphoserine mark is found at Ser177 and Ser183. Coiled-coil stretches lie at residues 234 to 265 and 291 to 348; these read KDIY…KRLK and KLIE…KHNE. Residues 361–427 form a disordered region; sequence EVEGKRFDRG…PGKSRRARRF (67 aa). Residues 397–407 are compositionally biased toward polar residues; the sequence is ATSSADVSGFS. The span at 409–427 shows a compositional bias: basic residues; sequence RKMKGKTNRPGKSRRARRF.

It belongs to the EBP2 family. Interacts with LOC1, NOP12, SIZ2, ULS1 and WSS1. In terms of processing, sumoylated.

It localises to the nucleus. The protein resides in the nucleolus. In terms of biological role, required for the processing of the 27S pre-rRNA. Probably involved in the step of the processing of the 27 SA precursor into the 27 SB intermediate. The chain is rRNA-processing protein EBP2 (EBP2) from Saccharomyces cerevisiae (strain ATCC 204508 / S288c) (Baker's yeast).